Consider the following 284-residue polypeptide: Bifunctional protein FolD 2 (284 aa).

NADP(+) contacts are provided by residues 164-166, S189, and I230; that span reads GRG.

It belongs to the tetrahydrofolate dehydrogenase/cyclohydrolase family. In terms of assembly, homodimer.

The enzyme catalyses (6R)-5,10-methylene-5,6,7,8-tetrahydrofolate + NADP(+) = (6R)-5,10-methenyltetrahydrofolate + NADPH. It carries out the reaction (6R)-5,10-methenyltetrahydrofolate + H2O = (6R)-10-formyltetrahydrofolate + H(+). The protein operates within one-carbon metabolism; tetrahydrofolate interconversion. Its function is as follows. Catalyzes the oxidation of 5,10-methylenetetrahydrofolate to 5,10-methenyltetrahydrofolate and then the hydrolysis of 5,10-methenyltetrahydrofolate to 10-formyltetrahydrofolate. This is Bifunctional protein FolD 2 from Desulfitobacterium hafniense (strain Y51).